A 331-amino-acid polypeptide reads, in one-letter code: DNA fragmentation factor subunit alpha (331 aa).

Met-1 is subject to N-acetylmethionine. Residues 17 to 96 (TLKPCLLRRN…ALASNEKWAY (80 aa)) form the CIDE-N domain. Thr-243 carries the post-translational modification Phosphothreonine. The disordered stretch occupies residues 305-331 (SLRSISASKASPPGDLQNPKRARQDPT). Ser-315 bears the Phosphoserine mark.

As to quaternary structure, heterodimer of DFFA and DFFB. Post-translationally, caspase-3 cleaves DFF45 at 2 sites to generate an active factor.

It is found in the cytoplasm. Its function is as follows. Inhibitor of the caspase-activated DNase (DFF40). This is DNA fragmentation factor subunit alpha (DFFA) from Homo sapiens (Human).